The chain runs to 810 residues: Hemoglobin-haptoglobin utilization protein B (810 aa).

The N-terminal stretch at 1–22 (MPIPFKPVLAVAAIAQAFPAFA) is a signal peptide. In terms of domain architecture, TBDR plug spans 34–166 (NEITVTGTHK…LGGAVNYQTK (133 aa)). The TBDR beta-barrel domain maps to 175–810 (DKPYHLGIKG…SYNFTIEAKF (636 aa)). The short motif at 793–810 (QRFTSPGRSYNFTIEAKF) is the TonB C-terminal box element.

This sequence belongs to the TonB-dependent receptor family.

The protein localises to the cell outer membrane. Functionally, acts as a receptor for hemoglobin or the hemoglobin/haptoglobin complex and is required for heme uptake. The polypeptide is Hemoglobin-haptoglobin utilization protein B (hpuB) (Neisseria meningitidis serogroup C).